Reading from the N-terminus, the 40-residue chain is Photosystem II reaction center protein J (40 aa).

The helical transmembrane segment at 10 to 30 threads the bilayer; the sequence is LWLIGTVAGILVIGLVGIFFY.

This sequence belongs to the PsbJ family. As to quaternary structure, PSII is composed of 1 copy each of membrane proteins PsbA, PsbB, PsbC, PsbD, PsbE, PsbF, PsbH, PsbI, PsbJ, PsbK, PsbL, PsbM, PsbT, PsbX, PsbY, PsbZ, Psb30/Ycf12, at least 3 peripheral proteins of the oxygen-evolving complex and a large number of cofactors. It forms dimeric complexes.

The protein localises to the plastid. It is found in the chloroplast thylakoid membrane. Functionally, one of the components of the core complex of photosystem II (PSII). PSII is a light-driven water:plastoquinone oxidoreductase that uses light energy to abstract electrons from H(2)O, generating O(2) and a proton gradient subsequently used for ATP formation. It consists of a core antenna complex that captures photons, and an electron transfer chain that converts photonic excitation into a charge separation. The polypeptide is Photosystem II reaction center protein J (Marchantia polymorpha (Common liverwort)).